The primary structure comprises 1326 residues: Putative late blight resistance protein homolog R1B-19 (1326 aa).

Coiled coils occupy residues 421-444 (RYSDSLAFLKNQLQVIQTEFESLQ) and 536-558 (PRMKEEIVGFEDIIENLRKKLLN). Position 570–577 (570–577 (GMPGLGKT)) interacts with ATP. The NB-ARC domain occupies 611-864 (LLSLLCDTIG…KVKTCRLHDV (254 aa)). Residues 749–770 (SEMEKEVECWEQVANNLGTRIH) are a coiled coil. LRR repeat units lie at residues 953–978 (FKFLKVLDLEHQVFIDFIPTELVYLK), 980–996 (FSAHIKQNSIPSSIYNL), 1027–1050 (LRHLYIPDFSTENEEALLENSAKL), 1053–1070 (LETLSTPYFSRYHVLNFP), 1071–1094 (IRLEILKLYRSKAFKTIPFCISAP), 1098–1118 (YLKLSGFYLDSQYLSETADHL), 1119–1146 (KNLEVLKLYYVEFGDHREWKVSNGMFPQ), 1167–1191 (FPNLEQLYIKVENCNELVVKSAMNI), and 1208–1230 (LIEKKTLKLNLSHDEDIPKAFKR). Residues 1209-1278 (IEKKTLKLNL…AWHARVVVPT (70 aa)) form the HMA domain.

This sequence belongs to the disease resistance NB-LRR family.

The protein resides in the cytoplasm. It is found in the membrane. Its function is as follows. Confers resistance to late blight (Phytophthora infestans) races carrying the avirulence gene Avr1. Resistance proteins guard the plant against pathogens that contain an appropriate avirulence protein via an indirect interaction with this avirulence protein. That triggers a defense system including the hypersensitive response, which restricts the pathogen growth. This chain is Putative late blight resistance protein homolog R1B-19 (R1B-19), found in Solanum demissum (Wild potato).